The following is a 358-amino-acid chain: MELGSADAFDRMGTLGVEEEFYIVDADGRPTSGIDDLVYGPEPPEPLAGRLDHELFQFTIETQTPLIEDPDEAGAAVSTVREALVDHAAAHGYRIAAAGLHPAAKWRELDHATKPRYQAQLDRIQYPQHRNTTAGLHVHVGVDDADKAVWVANELRWYLAPLLALSANSPFWNGFDTGLASARAKVFENLPNTGMPTAFDDFEEFQRFERRMVEYGSIDDRGELWYDVRPHTGHGTVEIRTPDAQTDPERVTDFVEYVHALVLDLADRYEAGESGTSVRRELLDENKWRATRYGRDTDFIAPDSEGVVSLVSFVETESDRLGVDGLRSLLDAESGTAVQRRIHEESGLDGLCEHLTLD.

It belongs to the glutamate--cysteine ligase type 2 family. YbdK subfamily.

The enzyme catalyses L-cysteine + L-glutamate + ATP = gamma-L-glutamyl-L-cysteine + ADP + phosphate + H(+). In terms of biological role, catalyzes the synthesis of gamma-glutamylcysteine (gamma-GC), the main low-molecular-weight thiol compound instead of glutathione in halophilic archaea. This is Glutamate--cysteine ligase from Haloferax volcanii (strain ATCC 29605 / DSM 3757 / JCM 8879 / NBRC 14742 / NCIMB 2012 / VKM B-1768 / DS2) (Halobacterium volcanii).